Reading from the N-terminus, the 2531-residue chain is Neurogenic locus notch homolog protein 1 (2531 aa).

Residues 1–18 form the signal peptide; the sequence is MPRLLAPLLCLTLLPALA. Residues 19-1725 are Extracellular-facing; the sequence is ARGLRCSQPS…VEPPLPSQLH (1707 aa). 4 EGF-like domains span residues 20 to 58, 59 to 99, 102 to 139, and 140 to 176; these read RGLR…QRCQ, DPSP…PLCL, LANA…KSCQ, and QADP…PTCR. Intrachain disulfides connect C24–C37, C31–C46, C48–C57, C63–C74, C68–C87, C89–C98, C106–C117, C111–C127, C129–C138, C144–C155, C149–C164, C166–C175, C182–C195, C189–C204, C206–C215, C222–C233, C227–C243, C245–C254, C261–C272, C266–C281, C283–C292, C299–C312, C306–C321, C323–C332, C339–C350, C344–C359, C361–C370, C376–C387, C381–C398, C400–C409, C416–C429, C423–C438, and C440–C449. N41 carries N-linked (GlcNAc...) asparagine glycosylation. S65 carries an O-linked (Glc...) serine glycan. T73 is a glycosylation site (O-linked (Fuc...) threonine). The O-linked (Fuc...) threonine glycan is linked to T116. S146 carries an O-linked (Glc...) serine glycan. The EGF-like 5; calcium-binding domain maps to 178–216; sequence DVNECSQNPGLCRHGGTCHNEIGSYRCACRATHTGPHCE. T194 is a glycosylation site (O-linked (Fuc...) threonine). Positions 218–255 constitute an EGF-like 6 domain; that stretch reads PYVPCSPSPCQNGGTCRPTGDTTHECACLPGFAGQNCE. T232 is a glycosylation site (O-linked (Fuc...) threonine; alternate). Residue T232 is glycosylated (O-linked (GalNAc...) threonine; alternate). In terms of domain architecture, EGF-like 7; calcium-binding spans 257–293; it reads NVDDCPGNNCKNGGACVDGVNTYNCRCPPEWTGQYCT. The EGF-like 8; calcium-binding domain occupies 295–333; that stretch reads DVDECQLMPNACQNGGTCHNSHGGYNCVCVNGWTGEDCS. T311 carries an O-linked (Fuc...) threonine glycan. The EGF-like 9; calcium-binding domain maps to 335-371; it reads NIDDCASAACFQGATCHDRVASFYCECPHGRTGLLCH. S341 carries O-linked (Glc...) serine glycosylation. T349 carries an O-linked (Fuc...) threonine glycan. One can recognise an EGF-like 10 domain in the interval 372–410; it reads LNDACISNPCNEGSNCDTNPVNGKAICTCPSGYTGPACS. S378 carries an O-linked (Glc...) serine glycan. The EGF-like 11; calcium-binding domain maps to 412 to 450; the sequence is DVDECALGANPCEHAGKCLNTLGSFECQCLQGYTGPRCE. Positions 420–421 are interaction with DLL4; that stretch reads AN. Ca(2+) is bound by residues T432 and S435. S435 carries an O-linked (Glc...) serine glycan. Positions 448–452 are interaction with DLL4; that stretch reads RCEID. Ca(2+)-binding residues include D452, V453, and E455. In terms of domain architecture, EGF-like 12; calcium-binding spans 452–488; the sequence is DVNECISNPCQNDATCLDQIGEFQCICMPGYEGVYCE. Disulfide bonds link C456–C467, C461–C476, and C478–C487. O-linked (Glc...) serine glycosylation occurs at S458. T466 is a glycosylation site (O-linked (Fuc...) threonine). Positions 469 and 470 each coordinate Ca(2+). Ca(2+) is bound by residues N490, T491, and E493. One can recognise an EGF-like 13; calcium-binding domain in the interval 490–526; it reads NTDECASSPCLHNGRCVDKINEFLCQCPKGFSGHLCQ. Cystine bridges form between C494-C505, C499-C514, C516-C525, C532-C543, C537-C552, C554-C563, C570-C580, C575-C589, C591-C600, C607-C618, C612-C627, C629-C638, C645-C655, C650-C664, C666-C675, C682-C693, C687-C702, C704-C713, C720-C730, C725-C739, C741-C750, C757-C768, C762-C777, C779-C788, C795-C806, C800-C815, C817-C826, C833-C844, C838-C855, C857-C866, C873-C884, C878-C893, C895-C904, C911-C922, C916-C931, C933-C942, C949-C960, C954-C969, C971-C980, C987-C998, C992-C1007, C1009-C1018, C1025-C1036, C1030-C1045, C1047-C1056, C1063-C1074, C1068-C1083, C1085-C1094, C1101-C1122, C1116-C1131, C1133-C1142, C1149-C1160, C1154-C1169, C1171-C1180, C1187-C1198, C1192-C1207, C1209-C1218, C1225-C1244, C1238-C1253, C1255-C1264, C1271-C1284, C1276-C1293, C1295-C1304, C1311-C1322, C1316-C1334, C1336-C1345, C1352-C1363, C1357-C1372, C1374-C1383, C1391-C1403, C1397-C1414, C1416-C1425, C1449-C1472, C1454-C1467, and C1463-C1479. S496 is a glycosylation site (O-linked (Glc...) serine). Ca(2+) contacts are provided by D507 and K508. The 37-residue stretch at 528–564 folds into the EGF-like 14; calcium-binding domain; it reads DVDECASTPCKNGAKCLDGPNTYTCVCTEGYTGTHCE. Residue S534 is glycosylated (O-linked (Glc...) serine). The EGF-like 15; calcium-binding domain maps to 566-601; sequence DIDECDPDPCHYGLCKDGVATFTCLCQPGYTGHHCE. One can recognise an EGF-like 16; calcium-binding domain in the interval 603-639; the sequence is NINECHSQPCRHGGTCQDRDNYYLCLCLKGTTGPNCE. S609 is a glycosylation site (O-linked (Glc...) serine). A glycan (O-linked (Fuc...) threonine) is linked at T617. One can recognise an EGF-like 17; calcium-binding domain in the interval 641-676; it reads NLDDCASNPCDSGTCLDKIDGYECACEPGYTGSMCN. Residue S647 is glycosylated (O-linked (Glc...) serine). The EGF-like 18; calcium-binding domain occupies 678 to 714; sequence NIDECAGSPCHNGGTCEDGIAGFTCRCPEGYHDPTCL. T692 is a glycosylation site (O-linked (Fuc...) threonine). An EGF-like 19; calcium-binding domain is found at 716–751; it reads EVNECNSNPCIHGACRDGLNGYKCDCAPGWSGTNCD. S722 is a glycosylation site (O-linked (Glc...) serine). Residues 753 to 789 form the EGF-like 20; calcium-binding domain; the sequence is NNNECESNPCVNGGTCKDMTSGYVCTCREGFSGPNCQ. An O-linked (Glc...) serine glycan is attached at S759. T767 carries O-linked (Fuc...) threonine glycosylation. A glycan (O-linked (GlcNAc) serine) is linked at S784. The 37-residue stretch at 791–827 folds into the EGF-like 21; calcium-binding domain; it reads NINECASNPCLNQGTCIDDVAGYKCNCPLPYTGATCE. S797 carries an O-linked (Glc...) serine glycan. T805 is a glycosylation site (O-linked (Fuc...) threonine). An EGF-like 22 domain is found at 829 to 867; that stretch reads VLAPCATSPCKNSGVCKESEDYESFSCVCPTGWQGQTCE. Residues 869-905 enclose the EGF-like 23; calcium-binding domain; it reads DINECVKSPCRHGASCQNTNGSYRCLCQAGYTGRNCE. The N-linked (GlcNAc...) asparagine glycan is linked to N888. A glycan (O-linked (GlcNAc) threonine) is linked at T900. Residues 907 to 943 enclose the EGF-like 24 domain; the sequence is DIDDCRPNPCHNGGSCTDGVNAAFCDCLPGFQGAFCE. O-linked (Fuc) serine glycosylation is present at S921. The 37-residue stretch at 945-981 folds into the EGF-like 25; calcium-binding domain; sequence DINECASNPCQNGANCTDCVDSYTCTCPTGFNGIHCE. S951 carries O-linked (Glc...) serine glycosylation. N959 carries N-linked (GlcNAc...) asparagine glycosylation. The EGF-like 26 domain maps to 983–1019; sequence NTPDCTESSCFNGGTCVDGINSFTCLCPPGFTGSYCQ. Residue T997 is glycosylated (O-linked (Fuc...) threonine). In terms of domain architecture, EGF-like 27; calcium-binding spans 1021–1057; sequence DVNECDSRPCLHGGTCQDSYGTYKCTCPQGYTGLNCQ. S1027 carries O-linked (Glc...) serine glycosylation. T1035 carries O-linked (Fuc...) threonine glycosylation. 2 consecutive EGF-like domains span residues 1059 to 1095 and 1097 to 1143; these read LVRW…FNCD and LSVS…SYCE. S1065 carries O-linked (Glc...) serine glycosylation. An EGF-like 30; calcium-binding domain is found at 1145 to 1181; it reads EVDECSPNPCQNGATCTDYLGGFSCKCVAGYHGSNCS. An O-linked (Fuc...) threonine glycan is attached at T1159. The N-linked (GlcNAc...) asparagine glycan is linked to N1179. The region spanning 1183 to 1219 is the EGF-like 31; calcium-binding domain; that stretch reads EINECLSQPCQNGGTCIDLTNTYKCSCPRGTQGVHCE. O-linked (Glc...) serine glycosylation is present at S1189. T1197 is a glycosylation site (O-linked (Fuc...) threonine). Positions 1221–1265 constitute an EGF-like 32; calcium-binding domain; the sequence is NVDDCHPPLDPASRSPKCFNNGTCVDQVGGYTCTCPPGFVGERCE. N1241 is a glycosylation site (N-linked (GlcNAc...) asparagine). 4 EGF-like domains span residues 1267–1305, 1307–1346, 1348–1384, and 1387–1426; these read DVNE…RRCE, VING…ATCE, DART…PECQ, and ASSP…LLCH. O-linked (Glc...) serine glycosylation occurs at S1273. O-linked (Fuc...) threonine glycosylation is present at T1362. A glycan (O-linked (GlcNAc...) threonine) is linked at T1379. O-linked (Fuc...) threonine; alternate glycosylation occurs at T1402. A glycan (O-linked (GalNAc...) threonine; alternate) is linked at T1402. 3 LNR repeats span residues 1449 to 1489, 1490 to 1531, and 1532 to 1571; these read CELP…PWKN, CTQS…CNPL, and YDQY…RLAA. 4 residues coordinate Ca(2+): D1457, N1460, D1475, and D1478. The N-linked (GlcNAc...) asparagine glycan is linked to N1489. 5 disulfide bridges follow: C1490/C1514, C1496/C1509, C1505/C1521, C1536/C1549, and C1545/C1561. N1587 carries N-linked (GlcNAc...) asparagine glycosylation. T1715 carries O-linked (GalNAc...) threonine glycosylation. The interaction with PSEN1 stretch occupies residues 1718–1750; the sequence is PPLPSQLHLMYVAAAAFVLLFFVGCGVLLSRKR. Residues 1726–1746 form a helical membrane-spanning segment; that stretch reads LMYVAAAAFVLLFFVGCGVLL. The Cytoplasmic segment spans residues 1747–2531; sequence SRKRRRQHGQ…QITHIPEAFK (785 aa). Residue K1749 forms a Glycyl lysine isopeptide (Lys-Gly) (interchain with G-Cter in ubiquitin) linkage. Positions 1770-1798 are disordered; sequence KKKRREPLGEDSVGLKPLKNASDGALMDD. At T1851 the chain carries Phosphothreonine. ANK repeat units lie at residues 1917-1946, 1950-1980, 1984-2013, 2017-2046, and 2050-2079; these read TGET…DANI, MGRT…DLDA, DGTT…DVNA, LGKS…NKDM, and KEET…NRDI. The HIF1AN-binding stretch occupies residues 1937–1945; it reads LLEASADAN. A (3S)-3-hydroxyasparagine; by HIF1AN modification is found at N1945. Positions 2004-2012 are HIF1AN-binding; that stretch reads LINSHADVN. Residue N2012 is modified to (3S)-3-hydroxyasparagine; by HIF1AN. 3 disordered regions span residues 2141-2185, 2382-2428, and 2440-2531; these read SATQ…DSSS, QPQN…SLPV, and PTSL…EAFK. The segment covering 2382–2395 has biased composition (low complexity); the sequence is QPQNLQPPSQPHLS. Residues 2440 to 2478 are compositionally biased toward polar residues; that stretch reads PTSLPSSMVPPMTTTQFLTPPSQHSYSSSPVDNTPSHQL. Residues 2488 to 2503 are compositionally biased toward low complexity; that stretch reads PSPESPDQWSSSSPHS. Polar residues predominate over residues 2504-2524; the sequence is NISDWSEGISSPPTSMPSQIT.

Belongs to the NOTCH family. In terms of assembly, heterodimer of a C-terminal fragment N(TM) and an N-terminal fragment N(EC) which are probably linked by disulfide bonds. Interacts with DNER, DTX1, DTX2 and RBPJ/RBPSUH. Also interacts with MAML1, MAML2 and MAML3 which act as transcriptional coactivators for NOTCH1. Notch 1 intracellular domain interacts with SNW1; the interaction involves multimerized NOTCH1 NICD and is implicated in a formation of an intermediate preactivation complex which associates with DNA-bound CBF-1/RBPJ. The activated membrane-bound form interacts with AAK1 which promotes NOTCH1 stabilization. Forms a trimeric complex with FBXW7 and SGK1. Interacts with HIF1AN. HIF1AN negatively regulates the function of notch intracellular domain (NICD), accelerating myogenic differentiation. Interacts (via NICD) with SNAI1 (via zinc fingers); the interaction induces SNAI1 degradation via MDM2-mediated ubiquitination and inhibits SNAI1-induced cell invasion. Interacts (via NICD) with MDM2A. Interacts (via NICD) with BCL6; the interaction decreases MAML1 recruitment by NOTCH1 NICD on target genes DNA and inhibits NOTCH1 transactivation activity. Interacts with THBS4. Interacts (via the EGF-like repeat region) with CCN3 (via CTCK domain). Interacts (via EGF-like domains) with DLL4 (via N-terminal DSL and MNNL domains). Interacts with ZMIZ1. Interacts (via NICD domain) with MEGF10 (via the cytoplasmic domain). Interacts with DLL1 and JAG1. Interacts (via NICD domain) with PRAG1. Forms a complex with PRAG1, N1ICD and MAML1, in a MAML1-dependent manner. Interacts (via transmembrane region) with PSEN1; the interaction is direct. Interacts with ZFP64. Post-translationally, synthesized in the endoplasmic reticulum as an inactive form which is proteolytically cleaved by a furin-like convertase in the trans-Golgi network before it reaches the plasma membrane to yield an active, ligand-accessible form. Cleavage results in a C-terminal fragment N(TM) and a N-terminal fragment N(EC). Following ligand binding, it is cleaved by ADAM17 to yield a membrane-associated intermediate fragment called notch extracellular truncation (NEXT). Following endocytosis, this fragment is then cleaved by one of the catalytic subunits of gamma-secretase (PSEN1 or PSEN2) to release a Notch-derived peptide containing the intracellular domain (NICD) from the membrane. Phosphorylated. In terms of processing, O-glycosylated on the EGF-like domains. O-glucosylated at Ser-435 by KDELC1 and KDELC2. Contains both O-linked fucose and O-linked glucose in the EGF-like domains 11, 12 and 13, which are interacting with the residues on DLL4. O-linked glycosylation by GALNT11 is involved in determination of left/right symmetry: glycosylation promotes activation of NOTCH1, possibly by promoting cleavage by ADAM17, modulating the balance between motile and immotile (sensory) cilia at the left-right organiser (LRO). MFNG-, RFNG- and LFNG-mediated modification of O-fucose residues at specific EGF-like domains results in inhibition of its activation by JAG1 and enhancement of its activation by DLL1 via an increased binding to DLL1. Post-translationally, ubiquitinated. Undergoes 'Lys-29'-linked polyubiquitination by ITCH; promotes the lysosomal degradation of non-activated internalized NOTCH1. Deubiquitination by USP12 is required for transport of internalized non-activated receptor from late endosomes to lysosomes for degradation. Monoubiquitination at Lys-1749 is required for activation by gamma-secretase cleavage, it promotes interaction with AAK1, which stabilizes it. Deubiquitination by EIF3F is necessary for nuclear import of activated Notch. Hydroxylated at Asn-1945 and Asn-2012 by HIF1AN. Hydroxylation reduces affinity for HI1AN and may thus indirectly modulate negative regulation of NICD. As to expression, expressed in the brain, kidney and spleen. Expressed in postnatal central nervous system (CNS) germinal zones and, in early postnatal life, within numerous cells throughout the CNS. Found in both subventricular and ventricular germinal zones.

The protein resides in the cell membrane. It is found in the late endosome membrane. Its subcellular location is the nucleus. Functions as a receptor for membrane-bound ligands Jagged-1 (JAG1), Jagged-2 (JAG2) and Delta-1 (DLL1) to regulate cell-fate determination. Upon ligand activation through the released notch intracellular domain (NICD) it forms a transcriptional activator complex with RBPJ/RBPSUH and activates genes of the enhancer of split locus. Affects the implementation of differentiation, proliferation and apoptotic programs. Involved in angiogenesis; negatively regulates endothelial cell proliferation and migration and angiogenic sprouting. Involved in the maturation of both CD4(+) and CD8(+) cells in the thymus. Important for follicular differentiation and possibly cell fate selection within the follicle. During cerebellar development, functions as a receptor for neuronal DNER and is involved in the differentiation of Bergmann glia. Represses neuronal and myogenic differentiation. May play an essential role in postimplantation development, probably in some aspect of cell specification and/or differentiation. May be involved in mesoderm development, somite formation and neurogenesis. May enhance HIF1A function by sequestering HIF1AN away from HIF1A. Required for the THBS4 function in regulating protective astrogenesis from the subventricular zone (SVZ) niche after injury. Involved in determination of left/right symmetry by modulating the balance between motile and immotile (sensory) cilia at the left-right organiser (LRO). In Rattus norvegicus (Rat), this protein is Neurogenic locus notch homolog protein 1 (Notch1).